Here is a 251-residue protein sequence, read N- to C-terminus: Xylose/arabinose import ATP-binding protein XylG (251 aa).

Residues 5-241 (LEIRDVHKSF…EITEVMTSFA (237 aa)) enclose the ABC transporter domain. 37–44 (GDNGAGKS) provides a ligand contact to ATP.

It belongs to the ABC transporter superfamily. The complex is composed of two ATP-binding proteins (XylG), two transmembrane proteins (XylH) and a solute-binding protein (XylF).

It localises to the cell membrane. The enzyme catalyses D-xylose(out) + ATP + H2O = D-xylose(in) + ADP + phosphate + H(+). The catalysed reaction is L-arabinose(out) + ATP + H2O = L-arabinose(in) + ADP + phosphate + H(+). Its function is as follows. Part of the ABC transporter complex XylFGH involved in the uptake of xylose and arabinose. Responsible for energy coupling to the transport system. The chain is Xylose/arabinose import ATP-binding protein XylG from Sulfolobus acidocaldarius (strain ATCC 33909 / DSM 639 / JCM 8929 / NBRC 15157 / NCIMB 11770).